The sequence spans 426 residues: Cephalotocin receptor 2 (426 aa).

The Extracellular portion of the chain corresponds to 1-51; sequence MYQAMEVESTSPSGFFLDFYTQSTIPTTDFLNNTNSSHPIRDEKLVKIEIA. N-linked (GlcNAc...) asparagine glycans are attached at residues asparagine 32 and asparagine 35. Residues 52–72 form a helical membrane-spanning segment; that stretch reads VLGTCFTLAIINNLCVLLVLL. Topologically, residues 73 to 84 are cytoplasmic; that stretch reads WRRKKVRRMQMF. A helical transmembrane segment spans residues 85-105; that stretch reads ILHLSIADLIVAFFNILPQLI. At 106 to 120 the chain is on the extracellular side; sequence WDITFRFMAGDAMCR. The cysteines at positions 119 and 198 are disulfide-linked. The chain crosses the membrane as a helical span at residues 121–141; sequence FIKYAQMFSLYLSTYILIMTA. Residues 142 to 165 are Cytoplasmic-facing; it reads VDRYRAICHPLSNQTWTPCMVYCK. The chain crosses the membrane as a helical span at residues 166-186; it reads IFIAYAIATIFSIPQAILFQM. At 187–208 the chain is on the extracellular side; the sequence is QEVNEGSGIYDCWVHFEPAWVL. Residues 209–229 form a helical membrane-spanning segment; the sequence is TAYALYIFFALYLIPILILFF. The Cytoplasmic segment spans residues 230–288; the sequence is TYGSICYTIWAKYRHAIKTKKDANTRYPQRRKKKGVILRTHSVHGFSKAKLNSVKLTFA. A helical membrane pass occupies residues 289-309; that stretch reads VIVTYIICWSPFFVSQIWWLF. Residues 310–319 are Extracellular-facing; it reads DETVVGNAGV. The chain crosses the membrane as a helical span at residues 320 to 340; that stretch reads VVILLMACLNSCTNPWIYLIF. The Cytoplasmic segment spans residues 341-426; that stretch reads NRNYISNVLP…DQFIYSDKTT (86 aa). The tract at residues 373-426 is disordered; the sequence is GSVRRDSRKTSDPKRISESRRISDARRISGKTQKNNSSSPRKTSDQFIYSDKTT. Residues 375–399 show a composition bias toward basic and acidic residues; sequence VRRDSRKTSDPKRISESRRISDARR. The segment covering 402–426 has biased composition (polar residues); that stretch reads GKTQKNNSSSPRKTSDQFIYSDKTT.

It belongs to the G-protein coupled receptor 1 family. Vasopressin/oxytocin receptor subfamily. As to expression, present in various peripheral tissues with highest expression in branchia and vas deferens. Very low expression detected in nervous system.

Its subcellular location is the cell membrane. Functionally, acts as a receptor for cephalotocin. The polypeptide is Cephalotocin receptor 2 (Octopus vulgaris (Common octopus)).